Reading from the N-terminus, the 210-residue chain is Urease accessory protein UreG (210 aa).

A GTP-binding site is contributed by 14-21 (GPVGSGKT).

The protein belongs to the SIMIBI class G3E GTPase family. UreG subfamily. As to quaternary structure, homodimer. UreD, UreF and UreG form a complex that acts as a GTP-hydrolysis-dependent molecular chaperone, activating the urease apoprotein by helping to assemble the nickel containing metallocenter of UreC. The UreE protein probably delivers the nickel.

The protein resides in the cytoplasm. In terms of biological role, facilitates the functional incorporation of the urease nickel metallocenter. This process requires GTP hydrolysis, probably effectuated by UreG. This chain is Urease accessory protein UreG, found in Rhodopseudomonas palustris (strain BisA53).